The following is a 639-amino-acid chain: ADP-ribosylation factor-binding protein GGA1 (639 aa).

Methionine 1 is modified (N-acetylmethionine). The region spanning 17-147 (ATNPLNKELD…MLKKQGIVKS (131 aa)) is the VHS domain. Positions 114–274 (KILELLYSWT…RLASDTEDND (161 aa)) are interaction with ARF3. Residues 171–299 (DEEKSKMLAR…VINLYKQLVR (129 aa)) enclose the GAT domain. Serine 185 is modified (phosphoserine). Positions 300 to 509 (GEEVNGDATA…ITVPLESIKP (210 aa)) are unstructured hinge. Disordered stretches follow at residues 320–421 (LDLS…SGLD) and 434–492 (SLPP…QPVP). Serine 355 bears the Phosphoserine; by CK2 mark. The short motif at 358-362 (DDELM) is the Autoinhibitory element. Positions 381-390 (GWNSFQSSDA) are enriched in polar residues. Phosphoserine is present on serine 418. Over residues 462–480 (SSSCSSPSSSATSLLHTVS) the composition is skewed to low complexity. The segment covering 481–490 (PEPPRPPQQP) has biased composition (pro residues). Positions 510 to 631 (SNILPVTVYD…NEMGDVDQFP (122 aa)) constitute a GAE domain.

This sequence belongs to the GGA protein family. Monomer. Interacts with GGA2 and GGA3. Binds to clathrin and activated ARFs, including ARF1, ARF5 and ARF6. Interacts with RABEP1. Interacts with RABGEF1. Interacts with the type-I membrane proteins LRP3, M6PR/CD-MPR and IGF2R/CI-MPR. Interacts (via N-terminal VHS domain) with SORL1/sorLA and SORT1 (via C-terminal cytosolic domain). Interacts with EPN4. Interacts with CCDC91. Interacts with HEATR5B/p200a. Interacts with SYNRG/gamma-synergin. Interacts (via GAE doamin) with NECAP1 and NECAP2. Interacts (via GAE domain) with AFTPH/aftiphilin. Interacts with TSG101 and UBC. Interacts with RNF11. Interacts (via VHS domain) with BACE1 (via DXXLL motif); the interaction highly increases when BACE1 is phosphorylated at 'Ser-498'. Interacts with CNST. Interacts with ADRA2B. Interacts with ARL3; the interaction recruits, in collaboration with RABEP1, PKD1:PKD2 complex to trans-Golgi network and is required for ciliary targeting. In terms of processing, phosphorylated by CK2 and dephosphorylated by PP2A. Phosphorylation of GGA1 allows the internal DXXLL motif to bind the VHS domain and to inhibit the recognition of cargo signals. Ubiquitinated. In terms of tissue distribution, ubiquitously expressed.

It is found in the golgi apparatus. The protein resides in the trans-Golgi network membrane. It localises to the endosome membrane. Its subcellular location is the early endosome membrane. Plays a role in protein sorting and trafficking between the trans-Golgi network (TGN) and endosomes. Mediates the ARF-dependent recruitment of clathrin to the TGN and binds ubiquitinated proteins and membrane cargo molecules with a cytosolic acidic cluster-dileucine (DXXLL) motif. Mediates export of the GPCR receptor ADRA2B to the cell surface. Required for targeting PKD1:PKD2 complex from the trans-Golgi network to the cilium membrane. Regulates retrograde transport of proteins such as phosphorylated form of BACE1 from endosomes to the trans-Golgi network. The chain is ADP-ribosylation factor-binding protein GGA1 (GGA1) from Homo sapiens (Human).